We begin with the raw amino-acid sequence, 284 residues long: Bifunctional protein FolD (284 aa).

Residues 165 to 167 (GAS), Ile190, and Ile231 contribute to the NADP(+) site.

Belongs to the tetrahydrofolate dehydrogenase/cyclohydrolase family. As to quaternary structure, homodimer.

The catalysed reaction is (6R)-5,10-methylene-5,6,7,8-tetrahydrofolate + NADP(+) = (6R)-5,10-methenyltetrahydrofolate + NADPH. It carries out the reaction (6R)-5,10-methenyltetrahydrofolate + H2O = (6R)-10-formyltetrahydrofolate + H(+). It functions in the pathway one-carbon metabolism; tetrahydrofolate interconversion. In terms of biological role, catalyzes the oxidation of 5,10-methylenetetrahydrofolate to 5,10-methenyltetrahydrofolate and then the hydrolysis of 5,10-methenyltetrahydrofolate to 10-formyltetrahydrofolate. This Alkaliphilus metalliredigens (strain QYMF) protein is Bifunctional protein FolD.